The chain runs to 311 residues: Olfactory receptor 1D4 (311 aa).

At 1–25 the chain is on the extracellular side; sequence MDGDNQSENSQFLLLGISESPEQQQ. Residue Asn5 is glycosylated (N-linked (GlcNAc...) asparagine). Residues 26–49 form a helical membrane-spanning segment; the sequence is ILFWMFLSMYLVTVLGNVLIILAI. The Cytoplasmic segment spans residues 50–57; that stretch reads SSDSHLHT. A helical transmembrane segment spans residues 58–79; sequence PMYFFLANLSFTDLFFVTNTIP. The Extracellular portion of the chain corresponds to 80 to 100; the sequence is KMLVNFQSQNKAISYAGCLTQ. A disulfide bridge links Cys97 with Cys189. Residues 101-120 form a helical membrane-spanning segment; it reads LYFLVSLVTLDNLILAVMAY. The Cytoplasmic portion of the chain corresponds to 121 to 140; the sequence is DRYVAICCPLHYVTAMSPGL. Residues 141–158 traverse the membrane as a helical segment; sequence CVLLLSLCWGLSVLYGLL. Residues 159–196 are Extracellular-facing; the sequence is LTFLLTRVTFCGPREIHYLFCDMYILLWLACSNTHIIH. A helical membrane pass occupies residues 197–220; the sequence is TALIATGCFIFLTLLGFMTTSYVR. The Cytoplasmic segment spans residues 221–237; that stretch reads IVRTILQMPSASKKYKT. The helical transmembrane segment at 238-260 threads the bilayer; that stretch reads FSTCASHLGVVSLFYGTLAMVYL. Topologically, residues 261-271 are extracellular; sequence QPLHTYSMKDS. A helical membrane pass occupies residues 272-291; the sequence is VATVMYAVLTPMMNPFIYSL. Topologically, residues 292–311 are cytoplasmic; that stretch reads RNKDMHGAPGRVLWRPFQRP.

It belongs to the G-protein coupled receptor 1 family.

It localises to the cell membrane. Odorant receptor. The chain is Olfactory receptor 1D4 (OR1D4) from Homo sapiens (Human).